The sequence spans 295 residues: (R)-phenoxypropionate/alpha-ketoglutarate-dioxygenase (295 aa).

Fe cation is bound by residues H111 and D113. Residues T138 and W255 each coordinate 2-oxoglutarate. H270 is a Fe cation binding site. R281 is a binding site for 2-oxoglutarate.

This sequence belongs to the TfdA dioxygenase family. As to quaternary structure, homotrimer. Requires Fe cation as cofactor. L-ascorbate serves as cofactor.

The catalysed reaction is (R)-2-(4-chloro-2-methylphenoxy)propanoate + 2-oxoglutarate + O2 = 2-methyl-4-chlorophenol + pyruvate + succinate + CO2. It catalyses the reaction (R)-(2,4-dichlorophenoxy)propanoate + 2-oxoglutarate + O2 = 2,4-dichlorophenol + pyruvate + succinate + CO2. The protein operates within xenobiotic degradation; 2-(2,4-dichlorophenoxy)propanoate degradation. With respect to regulation, inhibited by divalent cations, most significantly by copper and nickel, and by diethylpyrocarbonate (DEPC). Its function is as follows. Involved in the degradation of the phenoxypropionate herbicides. Catalyzes the enantiospecific cleavage of the ether bond in the herbicid R-dichlorprop ((R)-2-(2,4-dichlorophenoxy)propionate)(R-2,4-DP) and R-mecoprop ((R)-2-(4-chloro-2-methylphenoxy)propionate)(R-2,4-MCPP). It can also accept (RS)-2-(2,4,5-trichlorophenoxy)propionate, (RS)-2-(4-chlorophenoxy)propionate, (RS)-2-(m-chlorophenoxy)propionate, however it can only accept 2-oxoglutarate as oxygen acceptor. In Delftia acidovorans (Pseudomonas acidovorans), this protein is (R)-phenoxypropionate/alpha-ketoglutarate-dioxygenase.